The primary structure comprises 367 residues: Peptide chain release factor 2 (367 aa).

N5-methylglutamine is present on Gln-250.

The protein belongs to the prokaryotic/mitochondrial release factor family. Methylated by PrmC. Methylation increases the termination efficiency of RF2.

It is found in the cytoplasm. Functionally, peptide chain release factor 2 directs the termination of translation in response to the peptide chain termination codons UGA and UAA. This chain is Peptide chain release factor 2, found in Kineococcus radiotolerans (strain ATCC BAA-149 / DSM 14245 / SRS30216).